A 485-amino-acid chain; its full sequence is D-alanine--D-alanyl carrier protein ligase (485 aa).

ATP is bound at residue 144–145 (TS). Asp189 serves as a coordination point for D-alanine. 284–289 (NTYGPT) is a binding site for ATP. Val293 lines the D-alanine pocket. Positions 365 and 473 each coordinate ATP. Lys473 serves as a coordination point for D-alanine.

It belongs to the ATP-dependent AMP-binding enzyme family. DltA subfamily.

The protein localises to the cytoplasm. The enzyme catalyses holo-[D-alanyl-carrier protein] + D-alanine + ATP = D-alanyl-[D-alanyl-carrier protein] + AMP + diphosphate. It functions in the pathway cell wall biogenesis; lipoteichoic acid biosynthesis. Its function is as follows. Catalyzes the first step in the D-alanylation of lipoteichoic acid (LTA), the activation of D-alanine and its transfer onto the D-alanyl carrier protein (Dcp) DltC. In an ATP-dependent two-step reaction, forms a high energy D-alanyl-AMP intermediate, followed by transfer of the D-alanyl residue as a thiol ester to the phosphopantheinyl prosthetic group of the Dcp. D-alanylation of LTA plays an important role in modulating the properties of the cell wall in Gram-positive bacteria, influencing the net charge of the cell wall. The polypeptide is D-alanine--D-alanyl carrier protein ligase (Staphylococcus haemolyticus (strain JCSC1435)).